Here is a 136-residue protein sequence, read N- to C-terminus: Succinate dehydrogenase assembly factor 3, mitochondrial (136 aa).

Residues methionine 1–alanine 24 constitute a mitochondrion transit peptide.

This sequence belongs to the complex I LYR family. SDHAF3 subfamily. In terms of assembly, interacts with the iron-sulfur protein subunit within the SDH catalytic dimer.

The protein localises to the mitochondrion matrix. Functionally, plays an essential role in the assembly of succinate dehydrogenase (SDH), an enzyme complex (also referred to as respiratory complex II) that is a component of both the tricarboxylic acid (TCA) cycle and the mitochondrial electron transport chain, and which couples the oxidation of succinate to fumarate with the reduction of ubiquinone (coenzyme Q) to ubiquinol. Promotes maturation of the iron-sulfur protein subunit of the SDH catalytic dimer, protecting it from the deleterious effects of oxidants. May act together with SDHAF1. This chain is Succinate dehydrogenase assembly factor 3, mitochondrial, found in Pyricularia oryzae (strain 70-15 / ATCC MYA-4617 / FGSC 8958) (Rice blast fungus).